The sequence spans 666 residues: UvrABC system protein B (666 aa).

A Helicase ATP-binding domain is found at 25 to 412; that stretch reads NGIKNNNKWQ…SENIAEQVIR (388 aa). 38-45 serves as a coordination point for ATP; it reads GVTGSGKT. A Beta-hairpin motif is present at residues 91–114; it reads YYDYYQPEAYVAQTDTYIEKDASI. A Helicase C-terminal domain is found at 429–595; sequence QIDDLYSEIK…TIKKAVRDVI (167 aa). The 36-residue stretch at 622 to 657 folds into the UVR domain; that stretch reads DKLIKEFEKEMKEAAKELQFEKAAYFRDKVNELKKK.

Belongs to the UvrB family. Forms a heterotetramer with UvrA during the search for lesions. Interacts with UvrC in an incision complex.

The protein localises to the cytoplasm. Its function is as follows. The UvrABC repair system catalyzes the recognition and processing of DNA lesions. A damage recognition complex composed of 2 UvrA and 2 UvrB subunits scans DNA for abnormalities. Upon binding of the UvrA(2)B(2) complex to a putative damaged site, the DNA wraps around one UvrB monomer. DNA wrap is dependent on ATP binding by UvrB and probably causes local melting of the DNA helix, facilitating insertion of UvrB beta-hairpin between the DNA strands. Then UvrB probes one DNA strand for the presence of a lesion. If a lesion is found the UvrA subunits dissociate and the UvrB-DNA preincision complex is formed. This complex is subsequently bound by UvrC and the second UvrB is released. If no lesion is found, the DNA wraps around the other UvrB subunit that will check the other stand for damage. This is UvrABC system protein B from Clostridium acetobutylicum (strain ATCC 824 / DSM 792 / JCM 1419 / IAM 19013 / LMG 5710 / NBRC 13948 / NRRL B-527 / VKM B-1787 / 2291 / W).